Here is a 71-residue protein sequence, read N- to C-terminus: MKQGIHPKYEQVTASCSCGNVIKINSTVGHDLNLDVCGECHPFYTGKQRDVASGGRVDRFNKRFSVPGAKK.

Cys-16, Cys-18, Cys-37, and Cys-40 together coordinate Zn(2+).

Belongs to the bacterial ribosomal protein bL31 family. Type A subfamily. In terms of assembly, part of the 50S ribosomal subunit. Zn(2+) serves as cofactor.

Functionally, binds the 23S rRNA. The sequence is that of Large ribosomal subunit protein bL31 from Yersinia pseudotuberculosis serotype O:1b (strain IP 31758).